A 336-amino-acid chain; its full sequence is uncharacterized protein (336 aa).

Disordered regions lie at residues G29–A93 and L116–G147. Polar residues-rich tracts occupy residues S70 to A82 and P125 to H141.

This is an uncharacterized protein from Bos taurus (Bovine).